Reading from the N-terminus, the 212-residue chain is Large ribosomal subunit protein uL1 (212 aa).

It belongs to the universal ribosomal protein uL1 family. In terms of assembly, part of the 50S ribosomal subunit.

Functionally, binds directly to 23S rRNA. Probably involved in E site tRNA release. Its function is as follows. Protein L1 is also a translational repressor protein, it controls the translation of its operon by binding to its mRNA. This Halobacterium salinarum (strain ATCC 29341 / DSM 671 / R1) protein is Large ribosomal subunit protein uL1.